The primary structure comprises 621 residues: Complex I assembly factor ACAD9, mitochondrial (621 aa).

The transit peptide at 1–37 directs the protein to the mitochondrion; it reads MSGCGLFLRTTAAARACRGLVVSTANRRLLRTSPPVR. Lys-41 bears the N6-acetyllysine mark. Lys-92 is subject to N6-succinyllysine. The Proton acceptor role is filled by Glu-426. Thr-478 carries the post-translational modification Phosphothreonine. N6-acetyllysine; alternate is present on Lys-521. Lys-521 bears the N6-succinyllysine; alternate mark.

It belongs to the acyl-CoA dehydrogenase family. Homodimer. Interacts with NDUFAF1 and ECSIT. Part of the mitochondrial complex I assembly/MCIA complex that comprises at least the core subunits TMEM126B, NDUFAF1, ECSIT and ACAD9 and complement subunits such as COA1 and TMEM186. Interacts with TMEM70 and TMEM242. FAD serves as cofactor. Ubiquitously expressed in most normal human tissues and cancer cell lines with high level of expression in heart, skeletal muscles, brain, kidney and liver. In the cerebellum uniquely expressed in the granular layer (at protein level).

The protein localises to the mitochondrion inner membrane. It carries out the reaction eicosanoyl-CoA + oxidized [electron-transfer flavoprotein] + H(+) = (2E)-eicosenoyl-CoA + reduced [electron-transfer flavoprotein]. The catalysed reaction is octadecanoyl-CoA + oxidized [electron-transfer flavoprotein] + H(+) = (2E)-octadecenoyl-CoA + reduced [electron-transfer flavoprotein]. The enzyme catalyses oxidized [electron-transfer flavoprotein] + hexadecanoyl-CoA + H(+) = (2E)-hexadecenoyl-CoA + reduced [electron-transfer flavoprotein]. It catalyses the reaction decanoyl-CoA + oxidized [electron-transfer flavoprotein] + H(+) = (2E)-decenoyl-CoA + reduced [electron-transfer flavoprotein]. It carries out the reaction nonanoyl-CoA + oxidized [electron-transfer flavoprotein] + H(+) = (2E)-nonenoyl-CoA + reduced [electron-transfer flavoprotein]. The catalysed reaction is pentadecanoyl-CoA + oxidized [electron-transfer flavoprotein] + H(+) = (2E)-pentadecenoyl-CoA + reduced [electron-transfer flavoprotein]. The enzyme catalyses undecanoyl-CoA + oxidized [electron-transfer flavoprotein] + H(+) = trans-2-undecenoyl-CoA + reduced [electron-transfer flavoprotein]. It catalyses the reaction (9Z)-hexadecenoyl-CoA + oxidized [electron-transfer flavoprotein] + H(+) = (2E,9Z)-hexadecadienoyl-CoA + reduced [electron-transfer flavoprotein]. It carries out the reaction heptadecanoyl-CoA + oxidized [electron-transfer flavoprotein] + H(+) = trans-2-heptadecenoyl-CoA + reduced [electron-transfer flavoprotein]. The catalysed reaction is (9E)-octadecenoyl-CoA + oxidized [electron-transfer flavoprotein] + H(+) = (2E,9E)-octadecadienoyl-CoA + reduced [electron-transfer flavoprotein]. The enzyme catalyses oxidized [electron-transfer flavoprotein] + (9Z)-octadecenoyl-CoA + H(+) = (2E,9Z)-octadecadienoyl-CoA + reduced [electron-transfer flavoprotein]. It catalyses the reaction (9Z,12Z)-octadecadienoyl-CoA + oxidized [electron-transfer flavoprotein] + H(+) = (2E,9Z,12Z)-octadecatrienoyl-CoA + reduced [electron-transfer flavoprotein]. It carries out the reaction (4Z,7Z,10Z,13Z,16Z,19Z)-docosahexaenoyl-CoA + oxidized [electron-transfer flavoprotein] + H(+) = (2E,4Z,7Z,10Z,13Z,16Z,19Z)-docosaheptaenoyl-CoA + reduced [electron-transfer flavoprotein]. The catalysed reaction is tetradecanoyl-CoA + oxidized [electron-transfer flavoprotein] + H(+) = (2E)-tetradecenoyl-CoA + reduced [electron-transfer flavoprotein]. Its function is as follows. As part of the MCIA complex, primarily participates in the assembly of the mitochondrial complex I and therefore plays a role in oxidative phosphorylation. This moonlighting protein also has a dehydrogenase activity toward a broad range of substrates with greater specificity for long-chain unsaturated acyl-CoAs. However, in vivo, it does not seem to play a primary role in fatty acid oxidation. In addition, the function in complex I assembly is independent of the dehydrogenase activity of the protein. The sequence is that of Complex I assembly factor ACAD9, mitochondrial from Homo sapiens (Human).